Consider the following 372-residue polypeptide: Queuine tRNA-ribosyltransferase (372 aa).

The active-site Proton acceptor is the aspartate 92. Residues 92 to 96 (DSGGY), aspartate 146, glutamine 188, and glycine 215 contribute to the substrate site. The segment at 246–252 (GIGSLRE) is RNA binding. Catalysis depends on aspartate 265, which acts as the Nucleophile. An RNA binding; important for wobble base 34 recognition region spans residues 270 to 274 (TRLGR). 4 residues coordinate Zn(2+): cysteine 303, cysteine 305, cysteine 308, and histidine 334.

This sequence belongs to the queuine tRNA-ribosyltransferase family. Homodimer. Within each dimer, one monomer is responsible for RNA recognition and catalysis, while the other monomer binds to the replacement base PreQ1. The cofactor is Zn(2+).

It catalyses the reaction 7-aminomethyl-7-carbaguanine + guanosine(34) in tRNA = 7-aminomethyl-7-carbaguanosine(34) in tRNA + guanine. It participates in tRNA modification; tRNA-queuosine biosynthesis. In terms of biological role, catalyzes the base-exchange of a guanine (G) residue with the queuine precursor 7-aminomethyl-7-deazaguanine (PreQ1) at position 34 (anticodon wobble position) in tRNAs with GU(N) anticodons (tRNA-Asp, -Asn, -His and -Tyr). Catalysis occurs through a double-displacement mechanism. The nucleophile active site attacks the C1' of nucleotide 34 to detach the guanine base from the RNA, forming a covalent enzyme-RNA intermediate. The proton acceptor active site deprotonates the incoming PreQ1, allowing a nucleophilic attack on the C1' of the ribose to form the product. After dissociation, two additional enzymatic reactions on the tRNA convert PreQ1 to queuine (Q), resulting in the hypermodified nucleoside queuosine (7-(((4,5-cis-dihydroxy-2-cyclopenten-1-yl)amino)methyl)-7-deazaguanosine). This is Queuine tRNA-ribosyltransferase from Prochlorococcus marinus (strain MIT 9312).